Here is a 361-residue protein sequence, read N- to C-terminus: DNA polymerase IV 3 (361 aa).

Residues 12-192 (IIHVDMDAFY…LPVNKFHGVG (181 aa)) form the UmuC domain. The Mg(2+) site is built by Asp16 and Asp110. Glu111 is a catalytic residue.

Belongs to the DNA polymerase type-Y family. Monomer. Requires Mg(2+) as cofactor.

The protein localises to the cytoplasm. It catalyses the reaction DNA(n) + a 2'-deoxyribonucleoside 5'-triphosphate = DNA(n+1) + diphosphate. Poorly processive, error-prone DNA polymerase involved in untargeted mutagenesis. Copies undamaged DNA at stalled replication forks, which arise in vivo from mismatched or misaligned primer ends. These misaligned primers can be extended by PolIV. Exhibits no 3'-5' exonuclease (proofreading) activity. May be involved in translesional synthesis, in conjunction with the beta clamp from PolIII. The polypeptide is DNA polymerase IV 3 (dinB3) (Mesorhizobium japonicum (strain LMG 29417 / CECT 9101 / MAFF 303099) (Mesorhizobium loti (strain MAFF 303099))).